The primary structure comprises 149 residues: Flagellar basal-body protein FlbY (149 aa).

The basal body constitutes a major portion of the flagellar organelle and consists of five rings (E,L,P,S, and M) mounted on a central rod.

The protein resides in the bacterial flagellum basal body. The sequence is that of Flagellar basal-body protein FlbY (flbY) from Caulobacter vibrioides (strain ATCC 19089 / CIP 103742 / CB 15) (Caulobacter crescentus).